Reading from the N-terminus, the 63-residue chain is Conotoxin Cl14.11 (63 aa).

Positions 1-21 (MRFLLLLTVALLLTCIMETDA) are cleaved as a signal peptide. Residues 22–34 (EAKPEDLAERFRE) constitute a propeptide that is removed on maturation.

In terms of processing, contains 2 disulfide bond. In terms of tissue distribution, expressed by the venom duct.

Its subcellular location is the secreted. The sequence is that of Conotoxin Cl14.11 from Californiconus californicus (California cone).